The primary structure comprises 310 residues: Ribose-phosphate pyrophosphokinase (310 aa).

ATP is bound by residues 34-36 and 93-94; these read DME and RQ. Positions 127 and 167 each coordinate Mg(2+). The active site involves lysine 190. D-ribose 5-phosphate contacts are provided by residues arginine 192, aspartate 216, and 220–224; that span reads DSGGT.

It belongs to the ribose-phosphate pyrophosphokinase family. Class I subfamily. In terms of assembly, homohexamer. Requires Mg(2+) as cofactor.

The protein resides in the cytoplasm. The catalysed reaction is D-ribose 5-phosphate + ATP = 5-phospho-alpha-D-ribose 1-diphosphate + AMP + H(+). It participates in metabolic intermediate biosynthesis; 5-phospho-alpha-D-ribose 1-diphosphate biosynthesis; 5-phospho-alpha-D-ribose 1-diphosphate from D-ribose 5-phosphate (route I): step 1/1. Functionally, involved in the biosynthesis of the central metabolite phospho-alpha-D-ribosyl-1-pyrophosphate (PRPP) via the transfer of pyrophosphoryl group from ATP to 1-hydroxyl of ribose-5-phosphate (Rib-5-P). The chain is Ribose-phosphate pyrophosphokinase from Granulibacter bethesdensis (strain ATCC BAA-1260 / CGDNIH1).